A 511-amino-acid chain; its full sequence is GMP synthase [glutamine-hydrolyzing] (511 aa).

In terms of domain architecture, Glutamine amidotransferase type-1 spans 5–195 (DILVLDFGSQ…AKYACNCESV (191 aa)). The active-site Nucleophile is cysteine 82. Active-site residues include histidine 169 and glutamate 171. One can recognise a GMPS ATP-PPase domain in the interval 196–386 (WNMGSFAKTQ…LGLSKEVVYR (191 aa)). Residue 223 to 229 (SGGVDSS) coordinates ATP.

Homodimer.

The catalysed reaction is XMP + L-glutamine + ATP + H2O = GMP + L-glutamate + AMP + diphosphate + 2 H(+). The protein operates within purine metabolism; GMP biosynthesis; GMP from XMP (L-Gln route): step 1/1. Functionally, catalyzes the synthesis of GMP from XMP. The polypeptide is GMP synthase [glutamine-hydrolyzing] (Campylobacter jejuni (strain RM1221)).